A 78-amino-acid polypeptide reads, in one-letter code: Alpha-neurotoxin homolog 7 (78 aa).

The N-terminal stretch at 1–21 (MKTLLLTLVVVTIVCLDFGYT) is a signal peptide. Intrachain disulfides connect cysteine 24–cysteine 42, cysteine 37–cysteine 57, cysteine 59–cysteine 70, and cysteine 71–cysteine 76.

Belongs to the three-finger toxin family. Short-chain subfamily. Orphan group XII sub-subfamily. As to expression, expressed by the venom gland.

The protein resides in the secreted. In Micrurus corallinus (Brazilian coral snake), this protein is Alpha-neurotoxin homolog 7.